The primary structure comprises 231 residues: 5'-methylthioadenosine/S-adenosylhomocysteine nucleosidase (231 aa).

Residue Glu12 is the Proton acceptor of the active site. Substrate contacts are provided by residues Gly78, Met153, and 174-175 (ME). Asp198 acts as the Proton donor in catalysis.

This sequence belongs to the PNP/UDP phosphorylase family. MtnN subfamily.

It catalyses the reaction S-adenosyl-L-homocysteine + H2O = S-(5-deoxy-D-ribos-5-yl)-L-homocysteine + adenine. The catalysed reaction is S-methyl-5'-thioadenosine + H2O = 5-(methylsulfanyl)-D-ribose + adenine. It carries out the reaction 5'-deoxyadenosine + H2O = 5-deoxy-D-ribose + adenine. It functions in the pathway amino-acid biosynthesis; L-methionine biosynthesis via salvage pathway; S-methyl-5-thio-alpha-D-ribose 1-phosphate from S-methyl-5'-thioadenosine (hydrolase route): step 1/2. Catalyzes the irreversible cleavage of the glycosidic bond in both 5'-methylthioadenosine (MTA) and S-adenosylhomocysteine (SAH/AdoHcy) to adenine and the corresponding thioribose, 5'-methylthioribose and S-ribosylhomocysteine, respectively. Also cleaves 5'-deoxyadenosine, a toxic by-product of radical S-adenosylmethionine (SAM) enzymes, into 5-deoxyribose and adenine. This Bacillus cereus (strain B4264) protein is 5'-methylthioadenosine/S-adenosylhomocysteine nucleosidase.